Consider the following 446-residue polypeptide: MEKYLSVTTLTKYLKMKFDKDPYLERVYLTGQVSNFRKRPTHQYFSLKDDHAVIQATIWSGIYQKLGFDLEEGMKINVIGRVQVYEPSGSYSIIIEKAEPDGVGALAIQFEQLKKKLTEEGLFQERFKQALPQFSKRIGVVTSRSGAVIRDIITTVSRRFPGVDILLYPTKVQGEGAAEEIARNIARANQRDDLDLLIIGRGGGSIEDLWAFNEEIVVRAIFESRLPVISSVGHETDVTLADFVADRRAATPTAAAELATPVTKLDVLAHLQNQEKRMVTAVRNVLSKKQEALKKCSQSVIFRQPERLYDGYLQRLDQLQLRLKQSLRTRISDNKQLVQARTHQLVQLSPVTKIQRYQDRLGQLDKLLGSQMALVYDAKVAEAKRLSEALLMLDTSRIVARGYAIVKKEESVVDSVESLKKKDQVTLLMRDGQVELEVKDVKTKEI.

Belongs to the XseA family. In terms of assembly, heterooligomer composed of large and small subunits.

The protein localises to the cytoplasm. The catalysed reaction is Exonucleolytic cleavage in either 5'- to 3'- or 3'- to 5'-direction to yield nucleoside 5'-phosphates.. Its function is as follows. Bidirectionally degrades single-stranded DNA into large acid-insoluble oligonucleotides, which are then degraded further into small acid-soluble oligonucleotides. This is Exodeoxyribonuclease 7 large subunit from Streptococcus pneumoniae serotype 4 (strain ATCC BAA-334 / TIGR4).